Consider the following 614-residue polypeptide: MMRQATMDFSTPSVFDQQRGDSSEEVDLTMVYQAASNGDVNALTAVIREDPSILECCDSEGCTPLMHAVSGRQADTVKLLLKMGANINMQDAYGRTSLCLATYLGWLEGCVSLLRNGAKHNIPDKNGRLPLHAATAEPDMRLLTVLLQQSNISEINHQDNEGMTPLHWAAFHNQPQHTQMLLKKGADPTLVDKDFKTALHWAVQSGNRILCSIILSHHQGPSIINYDDESGKTCVHIAAAAGFSDIIHELARVPECNLQALDVDDRTPLHWAAAAGKAECVQSLLELGMDSNLRDINESTPLAYALYCGHTACVKLLSQESRTEPTRPPPSQSSRPQKKERRFNVLNQIFCKNKKEEQRAHQKDPSRDRYREEDTSEVNDIITTFDSIVGTNCQEQPGDQVAMVEFKKKTSDNSKYLLPEKKPLARKGLPPIRTQSLPPITLGNNFLTASHRATSHAGLSSAPHHMAQRSQKSRSEQDLLNNRTGCQMLLDNPWKSDSNQVFSYKVWTVSSSDKLLDRLLSVRPGHQEVSVPPHLRHLHNPSSGQNFQHLSPNRHKIRDLPFTRNNLAPLPDQKFLSGEPLRTNRVLPAIPSQRRHSTAAEESEHSANPTSDEN.

Residues 1 to 20 are disordered; the sequence is MMRQATMDFSTPSVFDQQRG. A compositionally biased stretch (polar residues) spans 7 to 16; sequence MDFSTPSVFD. 9 ANK repeats span residues 26–55, 60–89, 93–125, 126–157, 161–190, 194–223, 230–260, 264–293, and 297–326; these read VDLTMVYQAASNGDVNALTAVIREDPSILE, EGCTPLMHAVSGRQADTVKLLLKMGANINM, YGRTSLCLATYLGWLEGCVSLLRNGAKHNIPDK, NGRLPLHAATAEPDMRLLTVLLQQSNISEINH, EGMTPLHWAAFHNQPQHTQMLLKKGADPTL, DFKTALHWAVQSGNRILCSIILSHHQGPSI, SGKTCVHIAAAAGFSDIIHELARVPECNLQA, DDRTPLHWAAAAGKAECVQSLLELGMDSNL, and NESTPLAYALYCGHTACVKLLSQESRTEPT. Disordered stretches follow at residues 319–339, 354–375, 454–476, and 564–614; these read QESRTEPTRPPPSQSSRPQKK, KKEEQRAHQKDPSRDRYREEDT, TSHAGLSSAPHHMAQRSQKSRSE, and RNNL…SDEN. Over residues 354 to 373 the composition is skewed to basic and acidic residues; it reads KKEEQRAHQKDPSRDRYREE. At S475 the chain carries Phosphoserine.

The chain is Ankyrin repeat domain-containing protein 55 (ANKRD55) from Homo sapiens (Human).